Consider the following 391-residue polypeptide: GATA-binding factor 6-B (391 aa).

Residues 57-69 (GTHSVNSHWSQAT) show a composition bias toward polar residues. The interval 57–107 (GTHSVNSHWSQATSESSSYSSSSPHPSSRYHYSPSPPMANGSTRDTGYSSS) is disordered. Residues 70–89 (SESSSYSSSSPHPSSRYHYS) show a composition bias toward low complexity. Residues 96 to 107 (NGSTRDTGYSSS) show a composition bias toward polar residues. 2 consecutive GATA-type zinc fingers follow at residues 182–206 (CVNCGSVQTPLWRRDGTGHYLCNAC) and 236–260 (CANCHTTTTTLWRRNTEGEPVCNAC). Residues 277–334 (KEGIQTRKRKPKNLNKSKSSSSNGNSSHHITMTPTSTTSSTNSDDCIKNGSPSQNTAP) form a disordered region. Basic residues predominate over residues 282–291 (TRKRKPKNLN). The span at 292–319 (KSKSSSSNGNSSHHITMTPTSTTSSTNS) shows a compositional bias: low complexity.

In embryos, expressed in the presumptive heart mesoderm. In adults, widely distributed but predominant in the heart.

Its subcellular location is the nucleus. Its function is as follows. Transcriptional activator that binds 5'-GATA-3'-containing motifs within gene promoters. Regulates cardiac-specific transcription during embryogenesis and thereby cardiogenesis. This Xenopus laevis (African clawed frog) protein is GATA-binding factor 6-B (gata6-b).